The chain runs to 198 residues: Large ribosomal subunit protein bL9 (198 aa).

The segment covering 156–166 has biased composition (basic and acidic residues); the sequence is RGEDISTRQED. The segment at 156–198 is disordered; that stretch reads RGEDISTRQEDQDAAAEALAAAGEFFDPEAHNDGEQEEEAGDK.

This sequence belongs to the bacterial ribosomal protein bL9 family.

Functionally, binds to the 23S rRNA. The chain is Large ribosomal subunit protein bL9 from Rhodopseudomonas palustris (strain BisB18).